We begin with the raw amino-acid sequence, 179 residues long: MLSLDFLDDVRRMNKRQLYYQVLNFGMIVSSALMIWKGLMVITGSESPIVVVLSGSMEPAFHRGDLLFLTNRVEDPIRVGEIVVFRIEGREIPIVHRVLKIHEKQNGHIKFLTKGDNNAVDDRGLYKQGQHWLEKKDVVGRARGFVPYIGIVTILMNDYPKFKYAVLFLLGLFVLVHRE.

The Cytoplasmic portion of the chain corresponds to 1-16 (MLSLDFLDDVRRMNKR). The chain crosses the membrane as a helical; Signal-anchor for type II membrane protein span at residues 17-36 (QLYYQVLNFGMIVSSALMIW). At 37–179 (KGLMVITGSE…LGLFVLVHRE (143 aa)) the chain is on the lumenal side. Active-site charge relay system residues include serine 56, histidine 96, and aspartate 122. The interval 165–176 (AVLFLLGLFVLV) is C-terminal short (CTS) helix.

This sequence belongs to the peptidase S26B family. In terms of assembly, component of the signal peptidase complex paralog A (SPC-A) composed of a catalytic subunit SEC11A and three accessory subunits SPCS1, SPCS2 and SPCS3. Within the complex, interacts with SPCS2 and SPCS3. The complex induces a local thinning of the ER membrane which is used to measure the length of the signal peptide (SP) h-region of protein substrates. This ensures the selectivity of the complex towards h-regions shorter than 18-20 amino acids.

The protein localises to the endoplasmic reticulum membrane. The catalysed reaction is Cleavage of hydrophobic, N-terminal signal or leader sequences from secreted and periplasmic proteins.. In terms of biological role, catalytic component of the signal peptidase complex (SPC) which catalyzes the cleavage of N-terminal signal sequences from nascent proteins as they are translocated into the lumen of the endoplasmic reticulum. Specifically cleaves N-terminal signal peptides that contain a hydrophobic alpha-helix (h-region) shorter than 18-20 amino acids. The polypeptide is Signal peptidase complex catalytic subunit SEC11A (SEC11A) (Bos taurus (Bovine)).